A 707-amino-acid polypeptide reads, in one-letter code: MAP kinase-interacting serine/threonine-protein kinase mnk-1 (707 aa).

Positions 1–24 (MFFLDNTDSMTSSSRGITMPNTIS) are enriched in polar residues. Disordered stretches follow at residues 1–29 (MFFL…HEDV) and 101–131 (RQRE…YVGR). The region spanning 203-493 (KLTDEHLGSG…ADQILSHRWL (291 aa)) is the Protein kinase domain. ATP is bound by residues 209 to 217 (LGSGAYGSV) and lysine 232. Aspartate 325 acts as the Proton acceptor in catalysis. 2 disordered regions span residues 589 to 628 (RSGE…SADD) and 688 to 707 (FEDE…QVNV).

Belongs to the protein kinase superfamily. CAMK Ser/Thr protein kinase family. Mg(2+) serves as cofactor. As to expression, expressed in pharynx, intestine, vulva and body wall muscles.

The protein resides in the nucleus. The protein localises to the cytoplasm. It catalyses the reaction L-seryl-[protein] + ATP = O-phospho-L-seryl-[protein] + ADP + H(+). The enzyme catalyses L-threonyl-[protein] + ATP = O-phospho-L-threonyl-[protein] + ADP + H(+). Functionally, serine/threonine-protein kinase which is required in the germline to positively regulate lifespan. May play a role in body wall muscle contraction. May be involved in embryonic cytokinesis. The chain is MAP kinase-interacting serine/threonine-protein kinase mnk-1 from Caenorhabditis elegans.